Reading from the N-terminus, the 132-residue chain is Small ribosomal subunit protein uS8 (132 aa).

It belongs to the universal ribosomal protein uS8 family. Part of the 30S ribosomal subunit. Contacts proteins S5 and S12.

Its function is as follows. One of the primary rRNA binding proteins, it binds directly to 16S rRNA central domain where it helps coordinate assembly of the platform of the 30S subunit. The polypeptide is Small ribosomal subunit protein uS8 (Borrelia duttonii (strain Ly)).